A 314-amino-acid chain; its full sequence is Aryldialkylphosphatase (314 aa).

Positions 22, 24, and 137 each coordinate Fe cation. Residues lysine 137, histidine 170, and histidine 199 each contribute to the Co(2+) site. Lysine 137 carries the N6-carboxylysine modification. Aspartate 256 serves as a coordination point for Fe cation.

Belongs to the metallo-dependent hydrolases superfamily. Phosphotriesterase family. Homodimer. Co(2+) serves as cofactor. The cofactor is Fe cation.

The catalysed reaction is An aryl dialkyl phosphate + H2O = dialkyl phosphate + an aryl alcohol.. Inactivated by EDTA and o-phenanthroline. Functionally, has a low paraoxonase activity. Also active, but with a lower activity, against other organo-phosphorus insecticides such as Dursban, Coumaphos, pNP-butanoate or parathion. In Saccharolobus solfataricus (strain ATCC 35092 / DSM 1617 / JCM 11322 / P2) (Sulfolobus solfataricus), this protein is Aryldialkylphosphatase (php).